Reading from the N-terminus, the 659-residue chain is Exoribonuclease 2 (659 aa).

Positions Arg-189 to Asn-532 constitute an RNB domain. Positions Asn-576–Leu-658 constitute an S1 motif domain.

This sequence belongs to the RNR ribonuclease family. RNase II subfamily.

The protein resides in the cytoplasm. The catalysed reaction is Exonucleolytic cleavage in the 3'- to 5'-direction to yield nucleoside 5'-phosphates.. Its function is as follows. Involved in mRNA degradation. Hydrolyzes single-stranded polyribonucleotides processively in the 3' to 5' direction. This Glaesserella parasuis serovar 5 (strain SH0165) (Haemophilus parasuis) protein is Exoribonuclease 2.